Here is a 65-residue protein sequence, read N- to C-terminus: Large ribosomal subunit protein bL35 (65 aa).

A disordered region spans residues 1-28 (MPKIKTNRGAAKRFRKTGSGKIRRNKAF). The segment covering 10–26 (AAKRFRKTGSGKIRRNK) has biased composition (basic residues).

This sequence belongs to the bacterial ribosomal protein bL35 family.

In Syntrophotalea carbinolica (strain DSM 2380 / NBRC 103641 / GraBd1) (Pelobacter carbinolicus), this protein is Large ribosomal subunit protein bL35.